Here is a 938-residue protein sequence, read N- to C-terminus: Myocardin (938 aa).

Positions 12-27 match the MEF2C-binding motif; sequence IRRKFRSVLQLRLQQR. RPEL repeat units lie at residues 18–43, 62–87, and 106–131; these read SVLQ…PPLK, DSLR…QAST, and DDLN…PMDS. The tract at residues 37–64 is disordered; the sequence is GLIPPLKSPTEFHDPRKKLDSAKTEDSL. Positions 46 to 64 are enriched in basic and acidic residues; it reads TEFHDPRKKLDSAKTEDSL. The tract at residues 153 to 205 is HDAC5-binding; that stretch reads FEDDSSRDGLSPDQARSEDPQGSGGSTPDIKSTEAPLAGPLDTIQDLTPGSES. Disordered regions lie at residues 155–282 and 339–381; these read DDSS…PPPM and NEQM…PLPP. Polar residues predominate over residues 210–221; sequence TASQLSNQSDSG. Positions 248–265 are enriched in basic residues; it reads NRHKKPKDPKPKVKKLKY. The segment covering 345-360 has biased composition (low complexity); it reads NPNSSSTPLNNTPLSP. The segment covering 361–372 has biased composition (polar residues); it reads VKNSLSGQTGVS. One can recognise an SAP domain in the interval 383–417; that stretch reads LDDLKVSELRQQLRIRGLPVSGTKTALVDRLRPFQ. Serine 457, serine 461, serine 465, and serine 469 each carry phosphoserine; by GSK3-beta. Residues 501 to 521 are disordered; the sequence is ESLLSSLNGGSGPSEPDGLDS. The stretch at 522–566 forms a coiled coil; it reads EKDKMLVEKQKVINQLTWKLRQEQRQVEELRMQLQKQKSGCNDQK. The segment at 586–606 is disordered; the sequence is AAQQASGKGQGHSSDSPPPAC. Residues 588–600 show a composition bias toward polar residues; that stretch reads QQASGKGQGHSSD. Residues serine 627, serine 631, serine 635, and serine 639 each carry the phosphoserine; by GSK3-beta modification. 2 stretches are compositionally biased toward polar residues: residues 667 to 694 and 701 to 713; these read GAQR…QSSD and SIPS…SSPT. Positions 667-734 are disordered; it reads GAQRENHGVS…DAVKQQMTRS (68 aa). The tract at residues 717–938 is required for interaction with and ubiquitination by STUB1; that stretch reads ITQPPSYEDA…SPMDLHLQQW (222 aa). A phosphoserine; by MAPK1 and MAPK3 mark is found at serine 815, serine 862, and serine 869. Residue threonine 896 is modified to Phosphothreonine; by MAPK1 and MAPK3.

As to quaternary structure, homodimer. Interacts with MLLT7/FOXO4. Interacts with SRF, its association does not depend on specific DNA sequences for ternary complex formation. Interacts (via C-terminal) with EP300 (via the CREB-binding domain). Interacts with HDAC4 and HDAC5. Interacts with MEF2C. Interacts (via C-terminus) with STUB1/CHIP. Interacts with PURB. Post-translationally, ubiquitinated; by STUB1/CHIP at the C-terminus, leading to its degradation by the proteasome. Phosphorylation by GSK3B is required for STUB1/CHIP-mediated ubiquitination. In terms of processing, phosphorylation negatively regulates transcriptional activity. Phosphorylated; by GSK3B. Abundantly expressed in the heart, aorta media and bladder, weakly expressed in the stomach, intestine and lung.

Its subcellular location is the nucleus. Functionally, smooth muscle cells (SM) and cardiac muscle cells-specific transcriptional factor which uses the canonical single or multiple CArG boxes DNA sequence. Acts as a cofactor of serum response factor (SRF) with the potential to modulate SRF-target genes. Plays a crucial role in cardiogenesis, urinary bladder development, and differentiation of the smooth muscle cell lineage (myogenesis). Positively regulates the transcription of genes involved in vascular smooth muscle contraction. In Rattus norvegicus (Rat), this protein is Myocardin (Myocd).